The following is a 545-amino-acid chain: Calcium-binding mitochondrial carrier SAL1 (545 aa).

The EF-hand 1 domain occupies 11–46 (QRDIRYACLFKELDVKGNGQVTLDNLISAFEKNDHP). Lysine 65, aspartate 70, aspartate 93, aspartate 95, aspartate 97, lysine 99, and glutamate 104 together coordinate Ca(2+). 3 consecutive EF-hand domains span residues 80–115 (NAESQIWNGFQRIDLDHDGKIGINEINRYLSDLDNQ), 120–155 (NELNHELSNEKMNKFSRFFEWAFPKRKANIALRGQA), and 156–191 (SHKKNTDNDRSKKTTDSDLYVTYDQWRDFLLLVPRK). The Ca(2+) site is built by threonine 161 and serine 166. Solcar repeat units lie at residues 225–332 (IRGF…TKKI), 345–434 (LSKF…LKKW), and 452–541 (LSNL…LKKF). 6 helical membrane-spanning segments follow: residues 231 to 248 (FIAGGISGVISRTCTAPF), 307 to 326 (GNGLNVIKVFPESSIKFGSF), 355 to 368 (GLAGMAAQFSVYPI), 409 to 428 (GVTVGIVGIFPYAALDLGTF), 458 to 475 (LPMGAFSGTVGASVVYPI), and 516 to 535 (GLVPTLAKVCPAVSISYLCY).

The protein belongs to the mitochondrial carrier (TC 2.A.29) family.

Its subcellular location is the mitochondrion inner membrane. Its function is as follows. Calcium-dependent mitochondrial solute carrier. This chain is Calcium-binding mitochondrial carrier SAL1 (SAL1), found in Saccharomyces cerevisiae (Baker's yeast).